Here is a 603-residue protein sequence, read N- to C-terminus: Aspartate--tRNA(Asp/Asn) ligase (603 aa).

Residues 205 to 208 (QLFK) form an aspartate region. R227 is a binding site for L-aspartate. Residues 227 to 229 (RDE) and Q236 contribute to the ATP site. An L-aspartate-binding site is contributed by H463. E497 contacts ATP. Position 504 (R504) interacts with L-aspartate. 549–552 (GMDR) is a binding site for ATP.

This sequence belongs to the class-II aminoacyl-tRNA synthetase family. Type 1 subfamily. Homodimer.

It is found in the cytoplasm. It carries out the reaction tRNA(Asx) + L-aspartate + ATP = L-aspartyl-tRNA(Asx) + AMP + diphosphate. Functionally, aspartyl-tRNA synthetase with relaxed tRNA specificity since it is able to aspartylate not only its cognate tRNA(Asp) but also tRNA(Asn). Reaction proceeds in two steps: L-aspartate is first activated by ATP to form Asp-AMP and then transferred to the acceptor end of tRNA(Asp/Asn). The protein is Aspartate--tRNA(Asp/Asn) ligase of Anaeromyxobacter dehalogenans (strain 2CP-C).